A 288-amino-acid polypeptide reads, in one-letter code: MPVEEFVAGWISGAVGLVLGHPFDTVKVRLQTQSTYQGIVDCVVKTYRHESVLGFFKGMSFPIASVALVNSVLFGVYSNTLLALTATSHQERRAQPPSYTNIFIAGCTGGLLQAYCLAPFDLIKVRLQNQTEPRMQISSSMPRYRGPVHCAASILREEGPQGLFRGSWALVLRDTPTLGMYFVTYEGLCRQYTPEGQNPSSATVLVAGGFAGIASWITATPFDVIKSRMQMDGLKGRKYGGMLDCMASSFRQEGIGVFFKGMTLNSARAFPVNAATFLSYEYLLRLWR.

Solcar repeat units follow at residues 1-83 (MPVE…TLLA), 97-191 (PSYT…LCRQ), and 199-286 (PSSA…LLRL). The next 6 membrane-spanning stretches (helical) occupy residues 6–26 (FVAG…FDTV), 58–78 (GMSF…GVYS), 102–122 (IFIA…PFDL), 166–186 (GSWA…VTYE), 202–222 (ATVL…ATPF), and 266–286 (SARA…LLRL).

Belongs to the mitochondrial carrier (TC 2.A.29) family. In terms of tissue distribution, widely expressed, with highest levels in testis, liver and kidney and low levels in brain, including cortex, cerebellum, hippocampus and hypothalamus, and heart.

It localises to the mitochondrion inner membrane. This Mus musculus (Mouse) protein is Solute carrier family 25 member 45 (Slc25a45).